The sequence spans 315 residues: Ester hydrolase C11orf54 homolog (315 aa).

The Zn(2+) site is built by H266, H268, and H278.

Monomer. It depends on Zn(2+) as a cofactor.

The protein resides in the nucleus. It localises to the cytoplasm. In terms of biological role, exhibits ester hydrolase activity on the substrate p-nitrophenyl acetate, in vitro. Regulates DNA damage and repair by regulating HIF1A degradation via chaperone-mediated autophagy (CMA). In Mus musculus (Mouse), this protein is Ester hydrolase C11orf54 homolog.